The chain runs to 267 residues: Probable E3 ubiquitin-protein ligase dma1 (267 aa).

The 57-residue stretch at 60–116 (IYIGRYTERYNGGDVSAIVFRSKVVSRRHAQIFYENNTWYIQDMGSSSGTFLNHVRL) folds into the FHA domain. An RING-type zinc finger spans residues 192-236 (CCICLMPVLPCQALFVAPCSHSYHYKCIRPTLNESHPYFSCFICR).

This sequence belongs to the DMA1 family. Interacts with sid4.

It is found in the cytoplasm. The protein resides in the cytoskeleton. It localises to the microtubule organizing center. The protein localises to the spindle pole body. The catalysed reaction is S-ubiquitinyl-[E2 ubiquitin-conjugating enzyme]-L-cysteine + [acceptor protein]-L-lysine = [E2 ubiquitin-conjugating enzyme]-L-cysteine + N(6)-ubiquitinyl-[acceptor protein]-L-lysine.. Its function is as follows. Probable E3 ubiquitin-protein ligase which is a component of the spindle assembly checkpoint, required to prevent septum formation and premature exit from mitosis if spindle function is compromised. Inhibits the septation initiation netwok (SIN) during spindle checkpoint activation. The effect appears to be mediated through preventing the SIN activator, plo1 kinase, from localizing to the SPB. This chain is Probable E3 ubiquitin-protein ligase dma1 (dma1), found in Schizosaccharomyces pombe (strain 972 / ATCC 24843) (Fission yeast).